The primary structure comprises 250 residues: Eukaryotic translation initiation factor 2 subunit 2 (250 aa).

Residues 193 to 217 (CHTCKSPETQLTKDTRLFFLQCTNC) form a C4-type zinc finger.

It belongs to the eIF-2-beta/eIF-5 family. In terms of assembly, eukaryotic translation initiation factor 2 eIF2 is a heterotrimeric complex composed of an alpha, a beta and a gamma subunit.

The protein resides in the cytoplasm. It localises to the cytosol. Functionally, component of the eIF2 complex that functions in the early steps of protein synthesis by forming a ternary complex with GTP and initiator tRNA. This complex binds to a 40S ribosomal subunit, followed by mRNA binding to form a 43S pre-initiation complex (43S PIC). Junction of the 60S ribosomal subunit to form the 80S initiation complex is preceded by hydrolysis of the GTP bound to eIF2 and release of an eIF2-GDP binary complex. In order for eIF2 to recycle and catalyze another round of initiation, the GDP bound to eIF2 must exchange with GTP by way of a reaction catalyzed by eIF2B. The protein is Eukaryotic translation initiation factor 2 subunit 2 of Caenorhabditis elegans.